The chain runs to 254 residues: Tyrosine-protein phosphatase YwqE (254 aa).

This sequence belongs to the metallo-dependent hydrolases superfamily. CpsB/CapC family. Mn(2+) is required as a cofactor.

The catalysed reaction is O-phospho-L-tyrosyl-[protein] + H2O = L-tyrosyl-[protein] + phosphate. Its activity is regulated as follows. Inhibited by vanadate and sodium pyrophosphate. Not inhibited by sodium fluoride. Its function is as follows. Dephosphorylates the phosphotyrosine-containing proteins YwqD, YwqF and Ssb. This is Tyrosine-protein phosphatase YwqE (ywqE) from Bacillus subtilis (strain 168).